Reading from the N-terminus, the 158-residue chain is Hypoxanthine DNA glycosylase (158 aa).

Asn39 is an active-site residue.

It belongs to the uracil-DNA glycosylase (UDG) superfamily. Type 6 (HDG) family.

Excises hypoxanthine, a deamination product of adenine, from double-stranded DNA. Acts on double-stranded DNA containing G/I, T/I, A/I and C/I base pairs, but not on single-stranded inosine-containing DNA. Also has minor xanthine DNA glycosylase activity. Lacks any detectable uracil-DNA glycosylase activity. The sequence is that of Hypoxanthine DNA glycosylase from Methanosarcina barkeri (strain Fusaro / DSM 804).